The chain runs to 245 residues: Inner membrane protein YgaZ (245 aa).

The Cytoplasmic portion of the chain corresponds to 1–24 (MESPTPQPAPGSATFMEGCKDSLP). A helical transmembrane segment spans residues 25-45 (IVISYIPVAFAFGLNATRLGF). Over 46 to 63 (SPLESVFFSCIIYAGASQ) the chain is Periplasmic. The helical transmembrane segment at 64–84 (FVITAMLAAGSSLWIAALTVM) threads the bilayer. Residues 85–109 (AMDVRHVLYGPSLRSRIIQRLQKSK) are Cytoplasmic-facing. Residues 110–130 (TALWAFGLTDEVFAAATAKLV) traverse the membrane as a helical segment. The Periplasmic portion of the chain corresponds to 131 to 140 (RNNRRWSENW). A helical membrane pass occupies residues 141–161 (MIGIAFSSWSSWVFGTVIGAF). Residues 162–172 (SGSGLLQGYPA) are Cytoplasmic-facing. The chain crosses the membrane as a helical span at residues 173–193 (VEAALGFMLPALFMSFLLASF). Over 194–205 (QRKQSLCVTAAL) the chain is Periplasmic. The chain crosses the membrane as a helical span at residues 206–226 (VGALAGVTLFSIPVAILAGIV). Over 227-245 (CGCLTALIQAFWQGAPDEL) the chain is Cytoplasmic.

It belongs to the AzlC family.

It is found in the cell inner membrane. This Escherichia coli (strain K12) protein is Inner membrane protein YgaZ (ygaZ).